The sequence spans 120 residues: Large ribosomal subunit protein bL36m (120 aa).

Belongs to the bacterial ribosomal protein bL36 family. As to quaternary structure, component of the mitochondrial ribosome large subunit (39S) which comprises a 16S rRNA and about 50 distinct proteins.

It localises to the mitochondrion. The chain is Large ribosomal subunit protein bL36m (mrpl36) from Osmerus mordax (Rainbow smelt).